The following is a 394-amino-acid chain: Phosphopentomutase (394 aa).

Aspartate 15, aspartate 288, histidine 293, aspartate 329, histidine 330, and histidine 341 together coordinate Mn(2+).

This sequence belongs to the phosphopentomutase family. Mn(2+) serves as cofactor.

The protein resides in the cytoplasm. It carries out the reaction 2-deoxy-alpha-D-ribose 1-phosphate = 2-deoxy-D-ribose 5-phosphate. It catalyses the reaction alpha-D-ribose 1-phosphate = D-ribose 5-phosphate. Its pathway is carbohydrate degradation; 2-deoxy-D-ribose 1-phosphate degradation; D-glyceraldehyde 3-phosphate and acetaldehyde from 2-deoxy-alpha-D-ribose 1-phosphate: step 1/2. Its function is as follows. Isomerase that catalyzes the conversion of deoxy-ribose 1-phosphate (dRib-1-P) and ribose 1-phosphate (Rib-1-P) to deoxy-ribose 5-phosphate (dRib-5-P) and ribose 5-phosphate (Rib-5-P), respectively. The chain is Phosphopentomutase from Bacillus pumilus (strain SAFR-032).